Here is a 334-residue protein sequence, read N- to C-terminus: 6-phosphogluconolactonase (334 aa).

This sequence belongs to the cycloisomerase 2 family.

The enzyme catalyses 6-phospho-D-glucono-1,5-lactone + H2O = 6-phospho-D-gluconate + H(+). It participates in carbohydrate degradation; pentose phosphate pathway; D-ribulose 5-phosphate from D-glucose 6-phosphate (oxidative stage): step 2/3. Functionally, catalyzes the hydrolysis of 6-phosphogluconolactone to 6-phosphogluconate. The sequence is that of 6-phosphogluconolactonase from Buchnera aphidicola subsp. Acyrthosiphon pisum (strain Tuc7).